The chain runs to 130 residues: Albumin-1 E (130 aa).

Residues 1-26 (MASVKLASLIVLFATLGMFLTKNVGA) form the signal peptide. Cystine bridges form between C29–C46, C33–C48, and C41–C58. Propeptides lie at residues 64–69 (VFLKGN) and 123–130 (LLKSVSTA).

The C-terminal glycine may be removed from PA1b.

Functionally, PA1b binds to basic 7S globulin (BG) and stimulates its phosphorylation activity. Involved in the signal transduction system to regulate the growth and differentiation as a hormone peptide. Toxic to various insects through binding to a high affinity binding site in the insect gut. The sequence is that of Albumin-1 E from Pisum sativum (Garden pea).